A 329-amino-acid chain; its full sequence is Fructose-1,6-bisphosphatase class 1 2 (329 aa).

The Mg(2+) site is built by Glu92, Asp111, Leu113, and Asp114. Substrate-binding positions include Asp114–Ser117 and Asn206. Mg(2+) is bound at residue Glu278.

The protein belongs to the FBPase class 1 family. Homotetramer. The cofactor is Mg(2+).

Its subcellular location is the cytoplasm. It catalyses the reaction beta-D-fructose 1,6-bisphosphate + H2O = beta-D-fructose 6-phosphate + phosphate. It functions in the pathway carbohydrate biosynthesis; gluconeogenesis. In Xanthobacter autotrophicus (strain ATCC BAA-1158 / Py2), this protein is Fructose-1,6-bisphosphatase class 1 2.